Here is a 544-residue protein sequence, read N- to C-terminus: Prolyl 4-hydroxylase subunit alpha-3 (544 aa).

A signal peptide spans 1-19 (MGPAARLAALLAVLAFRAG). A coiled-coil region spans residues 107–131 (LEASENIRALKDGYERVEQDLPAFE). Residues 227–260 (EDALDHLAFAYFQAGNVLCALNLSREFLLYSPDN) form a TPR repeat. A glycan (N-linked (GlcNAc...) asparagine) is linked at asparagine 248. The 108-residue stretch at 422–529 (YAEYLQVVNY…KWVANKWIHE (108 aa)) folds into the Fe2OG dioxygenase domain. Residues histidine 440 and aspartate 442 each coordinate Fe cation. A glycan (N-linked (GlcNAc...) asparagine) is linked at asparagine 482. Residue histidine 510 participates in Fe cation binding. Position 520 (lysine 520) interacts with 2-oxoglutarate.

Belongs to the P4HA family. In terms of assembly, heterotetramer of two alpha-3 chains and two beta chains (the beta chain is the multi-functional PDI). It depends on Fe(2+) as a cofactor. The cofactor is L-ascorbate. N-glycosylation plays no role in the catalytic activity.

Its subcellular location is the endoplasmic reticulum lumen. The catalysed reaction is L-prolyl-[collagen] + 2-oxoglutarate + O2 = trans-4-hydroxy-L-prolyl-[collagen] + succinate + CO2. Its function is as follows. Catalyzes the post-translational formation of 4-hydroxyproline in -Xaa-Pro-Gly- sequences in collagens and other proteins. This Bos taurus (Bovine) protein is Prolyl 4-hydroxylase subunit alpha-3 (P4HA3).